The following is an 880-amino-acid chain: GATOR2 complex protein MIOS-A (880 aa).

WD repeat units lie at residues 60–102, 113–157, 185–224, 226–264, 268–309, and 399–441; these read SDTP…NSKC, KHAR…TPEV, GQNDACLSLCWLPRDQKLLLAGMHRNLAIFDLRNTNQKMF, NTKAVQGVTVDPHFHDRVASFFEGQVAIWDLRKFEKPVL, EQPK…TPIG, and RLRA…KQYA. The C4-type zinc finger occupies 740-786; that stretch reads VSCNFCGKSISYSCSSVPHQGRGFSQYGVSGSPTKSKFTSCPGCRKP. Residues Cys-742, Cys-745, Cys-780, Cys-783, Cys-793, Cys-832, Cys-835, His-837, His-840, His-843, Cys-854, Cys-859, and Cys-863 each coordinate Zn(2+). The segment at 787 to 868 adopts an RING-type; atypical zinc-finger fold; that stretch reads LPRCALCLIN…CSCKCMQLDT (82 aa).

It belongs to the WD repeat mio family. Component of the GATOR2 subcomplex, composed of MIOS, SEC13, SEH1L, WDR24 and WDR59. The GATOR2 complex interacts with CASTOR1 and CASTOR2; the interaction is negatively regulated by arginine. The GATOR2 complex interacts with SESN1, SESN2 and SESN3; the interaction is negatively regulated by amino acids. Interacts with SAR1; the interaction is direct, disrupted by leucine and mediates the interaction of SAR1 with the GATOR2 complex to negatively regulate the TORC1 signaling upon leucine deprivation.

The protein resides in the lysosome membrane. The GATOR2 complex is negatively regulated by the upstream amino acid sensors CASTOR1 and SESN2, which sequester the GATOR2 complex in absence of amino acids. In the presence of abundant amino acids, GATOR2 is released from CASTOR1 and SESN2 and activated. Functionally, as a component of the GATOR2 complex, functions as an activator of the amino acid-sensing branch of the mTORC1 signaling pathway. The GATOR2 complex indirectly activates mTORC1 through the inhibition of the GATOR1 subcomplex. GATOR2 probably acts as an E3 ubiquitin-protein ligase toward GATOR1. In the presence of abundant amino acids, the GATOR2 complex mediates ubiquitination of the NPRL2 core component of the GATOR1 complex, leading to GATOR1 inactivation. In the absence of amino acids, GATOR2 is inhibited, activating the GATOR1 complex. Within the GATOR2 complex, MIOS is required to prevent autoubiquitination of WDR24, the catalytic subunit of the complex. The polypeptide is GATOR2 complex protein MIOS-A (Xenopus laevis (African clawed frog)).